The primary structure comprises 1187 residues: Probable histidine kinase 5 (1187 aa).

Over 1 to 175 (MSRVGECGGG…QNNALSFNHG (175 aa)) the chain is Extracellular. The helical transmembrane segment at 176–196 (MIFSLSASLGIVVILVVITIF) threads the bilayer. Residues 197–226 (KRGKQANELCQHEKLLQTPSVKISRKWSKR) lie on the Cytoplasmic side of the membrane. Residues 227–247 (ALLLGVLVGLCSSVWIFSSMH) traverse the membrane as a helical segment. Topologically, residues 248 to 531 (ADVVARRIEN…FKHAPSLPWS (284 aa)) are extracellular. In terms of domain architecture, CHASE spans 295 to 519 (NPSAIDQKTF…GDPTRKHVMH (225 aa)). The helical transmembrane segment at 532 to 552 (AIMISSAVAIIVLLVGYIIYA) threads the bilayer. Over 553-1187 (TLNSLEEAED…LEADATDPLT (635 aa)) the chain is Cytoplasmic. Positions 587–862 (TVSHEIRTPM…TFSFTAIFKE (276 aa)) constitute a Histidine kinase domain. Residue His-590 is modified to Phosphohistidine; by autocatalysis. Response regulatory domains are found at residues 886–1017 (RALV…SKAL) and 1041–1178 (NILV…AHFL). 2 positions are modified to 4-aspartylphosphate: Asp-942 and Asp-1091.

Post-translationally, activation probably requires a transfer of a phosphate group between a His in the transmitter domain and an Asp of the receiver domain. As to expression, highly expressed in young leaves and at lower levels in roots, mature leaves, stems and spikelets.

It is found in the cell membrane. The catalysed reaction is ATP + protein L-histidine = ADP + protein N-phospho-L-histidine.. Functionally, cytokinin receptor related to bacterial two-component regulators. Functions as a histidine kinase and transmits the stress signal to a downstream MAPK cascade. The protein is Probable histidine kinase 5 of Oryza sativa subsp. japonica (Rice).